The following is a 72-amino-acid chain: Translation initiation factor IF-1 2 (72 aa).

An S1-like domain is found at 1 to 72 (MAKEELIEFE…TKGRINYRHK (72 aa)).

This sequence belongs to the IF-1 family. Component of the 30S ribosomal translation pre-initiation complex which assembles on the 30S ribosome in the order IF-2 and IF-3, IF-1 and N-formylmethionyl-tRNA(fMet); mRNA recruitment can occur at any time during PIC assembly.

Its subcellular location is the cytoplasm. One of the essential components for the initiation of protein synthesis. Stabilizes the binding of IF-2 and IF-3 on the 30S subunit to which N-formylmethionyl-tRNA(fMet) subsequently binds. Helps modulate mRNA selection, yielding the 30S pre-initiation complex (PIC). Upon addition of the 50S ribosomal subunit IF-1, IF-2 and IF-3 are released leaving the mature 70S translation initiation complex. The sequence is that of Translation initiation factor IF-1 2 from Ralstonia nicotianae (strain ATCC BAA-1114 / GMI1000) (Ralstonia solanacearum).